A 365-amino-acid polypeptide reads, in one-letter code: tRNA-specific 2-thiouridylase MnmA (365 aa).

ATP-binding positions include 6 to 13 (AMSGGVDS) and Leu32. The active-site Nucleophile is the Cys101. Cys101 and Cys199 form a disulfide bridge. Gly125 serves as a coordination point for ATP. Residues 149-151 (KDQ) form an interaction with tRNA region. The active-site Cysteine persulfide intermediate is the Cys199.

This sequence belongs to the MnmA/TRMU family.

It is found in the cytoplasm. The enzyme catalyses S-sulfanyl-L-cysteinyl-[protein] + uridine(34) in tRNA + AH2 + ATP = 2-thiouridine(34) in tRNA + L-cysteinyl-[protein] + A + AMP + diphosphate + H(+). Its function is as follows. Catalyzes the 2-thiolation of uridine at the wobble position (U34) of tRNA, leading to the formation of s(2)U34. The sequence is that of tRNA-specific 2-thiouridylase MnmA from Corynebacterium glutamicum (strain R).